Reading from the N-terminus, the 898-residue chain is Tight junction protein ZO-3 (898 aa).

A PDZ 1 domain is found at 11–93; that stretch reads TATLCRDPRR…LANITVKRPR (83 aa). Positions 98–165 are disordered; it reads PATKAGTSGR…SPGGNSEANG (68 aa). Phosphoserine is present on residues Ser-128, Ser-156, Ser-161, Ser-195, and Ser-313. The region spanning 187 to 264 is the PDZ 2 domain; the sequence is SVLVRRTESE…KLTLLVLRDR (78 aa). Positions 295-368 are disordered; it reads LSQAVPSHVP…QSAEDRGYSP (74 aa). The segment covering 312-349 has biased composition (basic and acidic residues); that stretch reads RSLDSDGTDSPRDSPPLRRENSLDSRTISEPDAPRHSS. At Thr-319 the chain carries Phosphothreonine. Residues Ser-321 and Ser-360 each carry the phosphoserine modification. The 67-residue stretch at 369-435 folds into the PDZ 3 domain; the sequence is DSRVVRFHKG…LTREEAVQFL (67 aa). Residues 464–538 enclose the SH3 domain; it reads GDSFYIRTHF…PNQSRAEQLA (75 aa). The Guanylate kinase-like domain occupies 569 to 750; that stretch reads LRRGAKKSTQ…WYQELKAVVR (182 aa). Ser-580 carries the post-translational modification Phosphoserine. Residues 759-898 form a disordered region; it reads TAEDQLDNSS…GYDWGPATDL (140 aa). Acidic residues predominate over residues 762–772; sequence DQLDNSSEDNL. The span at 780–790 shows a compositional bias: low complexity; the sequence is ADSSADLSCDS. Acidic residues predominate over residues 796 to 814; that stretch reads YETDGEGYTDGEGYTDVDE. Over residues 831–841 the composition is skewed to basic and acidic residues; the sequence is EEPRSPRDHGR. Residues Ser-835, Ser-884, and Ser-885 each carry the phosphoserine modification.

This sequence belongs to the MAGUK family. As to quaternary structure, heterodimer with TJP1. Interacts with UBN1. Interacts with occludin OCLN and claudins. Interacts with PATJ. Interacts with FASLG. Interacts with CCND1. In terms of processing, phosphorylated.

Its subcellular location is the cell membrane. It is found in the cell junction. It localises to the tight junction. The protein localises to the nucleus. Its function is as follows. TJP1, TJP2, and TJP3 are closely related scaffolding proteins that link tight junction (TJ) transmembrane proteins such as claudins, junctional adhesion molecules, and occludin to the actin cytoskeleton. The tight junction acts to limit movement of substances through the paracellular space and as a boundary between the compositionally distinct apical and basolateral plasma membrane domains of epithelial and endothelial cells. Binds and recruits PATJ to tight junctions where it connects and stabilizes apical and lateral components of tight junctions. Promotes cell-cycle progression through the sequestration of cyclin D1 (CCND1) at tight junctions during mitosis which prevents CCND1 degradation during M-phase and enables S-phase transition. With TJP1 and TJP2, participates in the junctional retention and stability of the transcription factor DBPA, but is not involved in its shuttling to the nucleus. Contrary to TJP2, TJP3 is dispensable for individual viability, embryonic development, epithelial differentiation, and the establishment of TJs, at least in the laboratory environment. This chain is Tight junction protein ZO-3 (TJP3), found in Canis lupus familiaris (Dog).